The following is a 157-amino-acid chain: 2-C-methyl-D-erythritol 2,4-cyclodiphosphate synthase (157 aa).

The a divalent metal cation site is built by aspartate 8 and histidine 10. 4-CDP-2-C-methyl-D-erythritol 2-phosphate contacts are provided by residues aspartate 8–histidine 10 and histidine 34–serine 35. Position 42 (histidine 42) interacts with a divalent metal cation. Residues aspartate 56–glycine 58, phenylalanine 61–aspartate 65, alanine 100–alanine 106, threonine 132–glutamate 135, phenylalanine 139, and arginine 142 contribute to the 4-CDP-2-C-methyl-D-erythritol 2-phosphate site.

It belongs to the IspF family. As to quaternary structure, homotrimer. It depends on a divalent metal cation as a cofactor.

The catalysed reaction is 4-CDP-2-C-methyl-D-erythritol 2-phosphate = 2-C-methyl-D-erythritol 2,4-cyclic diphosphate + CMP. The protein operates within isoprenoid biosynthesis; isopentenyl diphosphate biosynthesis via DXP pathway; isopentenyl diphosphate from 1-deoxy-D-xylulose 5-phosphate: step 4/6. Functionally, involved in the biosynthesis of isopentenyl diphosphate (IPP) and dimethylallyl diphosphate (DMAPP), two major building blocks of isoprenoid compounds. Catalyzes the conversion of 4-diphosphocytidyl-2-C-methyl-D-erythritol 2-phosphate (CDP-ME2P) to 2-C-methyl-D-erythritol 2,4-cyclodiphosphate (ME-CPP) with a corresponding release of cytidine 5-monophosphate (CMP). The chain is 2-C-methyl-D-erythritol 2,4-cyclodiphosphate synthase from Geobacter sulfurreducens (strain ATCC 51573 / DSM 12127 / PCA).